The sequence spans 709 residues: Homeobox-leucine zipper protein TF1 (709 aa).

Residues 66–125 (RKRRLQRLTGKQSEVLEGFFSICGHPDDGQKRHLSETTGLGLDQVKFWFQNKRTQVKTMC) constitute a DNA-binding region (homeobox). Positions 166–187 (NQLAVEMERLMGQSEWLQQEIA) form a coiled coil. In terms of domain architecture, START spans 212–441 (GQHDQQMIAE…MARQSARMRD (230 aa)).

It belongs to the HD-ZIP homeobox family. Class IV subfamily.

The protein localises to the nucleus. Probable transcription factor. This chain is Homeobox-leucine zipper protein TF1 (TF1), found in Oryza sativa subsp. japonica (Rice).